We begin with the raw amino-acid sequence, 671 residues long: DNA ligase (671 aa).

NAD(+) is bound by residues 32–36 (DAEYD), 81–82 (SL), and Glu-113. The N6-AMP-lysine intermediate role is filled by Lys-115. Positions 136, 173, 290, and 314 each coordinate NAD(+). The Zn(2+) site is built by Cys-408, Cys-411, Cys-426, and Cys-432. The 79-residue stretch at 593–671 (EIDSPFAGKT…EAEMIRLLGA (79 aa)) folds into the BRCT domain.

It belongs to the NAD-dependent DNA ligase family. LigA subfamily. It depends on Mg(2+) as a cofactor. The cofactor is Mn(2+).

The enzyme catalyses NAD(+) + (deoxyribonucleotide)n-3'-hydroxyl + 5'-phospho-(deoxyribonucleotide)m = (deoxyribonucleotide)n+m + AMP + beta-nicotinamide D-nucleotide.. Its function is as follows. DNA ligase that catalyzes the formation of phosphodiester linkages between 5'-phosphoryl and 3'-hydroxyl groups in double-stranded DNA using NAD as a coenzyme and as the energy source for the reaction. It is essential for DNA replication and repair of damaged DNA. The chain is DNA ligase from Salmonella gallinarum (strain 287/91 / NCTC 13346).